The following is a 46-amino-acid chain: Alpha-1-antiproteinase (46 aa).

Serine 30 carries the phosphoserine modification.

Belongs to the serpin family. Post-translationally, N-glycosylated; contains bi- and triantennary glycans with a bisecting N-acetylglucosamine and fucose residue. Plasma.

The protein localises to the secreted. The polypeptide is Alpha-1-antiproteinase (Notamacropus eugenii (Tammar wallaby)).